Reading from the N-terminus, the 670-residue chain is Oligopeptidase PepF (670 aa).

A Zn(2+)-binding site is contributed by His456. The active site involves Glu457. 2 residues coordinate Zn(2+): His460 and His463.

It belongs to the peptidase M3B family. Requires Zn(2+) as cofactor.

It is found in the cytoplasm. Overexpression results in inhibition of sporulation initiation. This sporulation deficiency could be the result of hydrolysis by PepF of the PhrA peptide, a phosphatase regulator. Thus, overexpression of PepF appears to act at the level of the phosphorelay, most likely through modulation of the negative role played by phosphatases. Overexpression of PepF also affects the activity of the competence and sporulation stimulating factor PhrC. This Bacillus subtilis (strain 168) protein is Oligopeptidase PepF.